The sequence spans 546 residues: FAD-dependent monooxygenase (546 aa).

Positions 1-17 are cleaved as a signal peptide; the sequence is MYDVIVVGAGWCGLAAA. Ile106 is an FAD binding site. N-linked (GlcNAc...) asparagine glycans are attached at residues Asn239 and Asn343.

It belongs to the FAD-binding monooxygenase family. Requires FAD as cofactor.

It functions in the pathway antifungal biosynthesis. Its function is as follows. FAD-dependent monooxygenase; part of the gene cluster that mediates the biosynthesis of the tetrahydropyranyl antifungal agent lanomycin that acts as an inhibitor of CYP51 and blocks the ergosterol biosynthesis. The biosynthesis probably begins with the formation of an hexaketide, followed by methionine mediated alkylation of C-2 and C-6, and methylation of the reduced C-3 oxygen, pyran forming reductive ring closure, oxygenation of C-4, beta-keto reduction, enoyl reduction and dehydration of the remaining oxygens, and finally, acylation with glycine to complete the biosynthesis. The protein is FAD-dependent monooxygenase of Pyrenophora dematioidea (Helminthosporium dematioideum).